The chain runs to 472 residues: UDP-glycosyltransferase 100 (472 aa).

Catalysis depends on His-15, which acts as the Proton acceptor. Position 15 (His-15) interacts with an anthocyanidin. Asp-117 serves as the catalytic Charge relay. UDP-alpha-D-glucose is bound by residues Ala-344, Gln-346, His-361, Trp-364, Asn-365, Ser-366, and Glu-369. Gly-384 is an an anthocyanidin binding site. Glu-385 and Gln-386 together coordinate UDP-alpha-D-glucose.

It belongs to the UDP-glycosyltransferase family.

The catalysed reaction is (20S)-protopanaxadiol + UDP-alpha-D-glucose = (20S)-ginsenoside C-K + UDP + H(+). It catalyses the reaction (20S)-protopanaxatriol + UDP-alpha-D-glucose = (20S)-ginsenoside Rh1 + UDP + H(+). It carries out the reaction (20S)-ginsenoside F1 + UDP-alpha-D-glucose = (20S)-ginsenoside Rg1 + UDP + H(+). Its pathway is secondary metabolite biosynthesis; terpenoid biosynthesis. In terms of biological role, component of the dammarane-type triterpene saponins (e.g. PPT-type ginsenosides or panaxosides) biosynthetic pathway. Glycosyltransferase that catalyzes the biosynthesis of ginsenoside Rh1 from protopanaxatriol (PPT) and the conversion of ginsenoside F1 to ginsenoside Rg1. In Panax ginseng (Korean ginseng), this protein is UDP-glycosyltransferase 100.